Reading from the N-terminus, the 175-residue chain is MGRTLESKKQIVKKIEDLLDNSEMALVLDYKGLSTKEMSDLRSRLQQSDGVCKVTKNTLMRQAIKGKNSWTGLDSLLTGTNAFVLIKGDVGSAVKAVQAFQKETQKSETKGGLFEGKLLSQDEIKAIAKLPSKEALMGQIAGALNSITSKIAIGINEVPSGLARSLKQHSENGES.

This sequence belongs to the universal ribosomal protein uL10 family. As to quaternary structure, part of the ribosomal stalk of the 50S ribosomal subunit. The N-terminus interacts with L11 and the large rRNA to form the base of the stalk. The C-terminus forms an elongated spine to which L12 dimers bind in a sequential fashion forming a multimeric L10(L12)X complex.

In terms of biological role, forms part of the ribosomal stalk, playing a central role in the interaction of the ribosome with GTP-bound translation factors. The chain is Large ribosomal subunit protein uL10 from Prochlorococcus marinus (strain NATL2A).